A 196-amino-acid chain; its full sequence is O-methyltransferase dpmpI (196 aa).

S-adenosyl-L-methionine contacts are provided by residues 127–128 (GG), Asp-152, and 174–175 (SF). Residues 166–196 (NGIEAVPHSFEDPQPIKSKSPRLDNLARERL) form a disordered region. A compositionally biased stretch (basic and acidic residues) spans 186 to 196 (PRLDNLARERL).

Belongs to the class I-like SAM-binding methyltransferase superfamily. Cation-independent O-methyltransferase family.

It functions in the pathway secondary metabolite biosynthesis; terpenoid biosynthesis. Its function is as follows. O-methyltransferase; part of the gene cluster that mediates the biosynthesis of diterpenoid pyrones. The first step of the pathway is the synthesis of the alpha-pyrone moiety by the polyketide synthase dpmpA via condensation of one acetyl-CoA starter unit with 3 malonyl-CoA units and 2 methylations. The alpha-pyrone is then combined with geranylgeranyl pyrophosphate (GGPP) formed by the GGPP synthase dpmpD through the action of the prenyltransferase dpmpC to yield a linear alpha-pyrone diterpenoid. Subsequent steps in the diterpenoid pyrone biosynthetic pathway involve the decalin core formation, which is initiated by the epoxidation of the C10-C11 olefin by the FAD-dependent oxidoreductase dpmpE, and is followed by a cyclization cascade catalyzed by the terpene cyclase dpmpB. The short chain dehydrogenase/reductase dpmpG then oxidizes the 8S hydroxy group to a ketone and the short chain dehydrogenase/reductase dpmpH reduces the ketone to the 8R hydroxy group to yield higginsianin B. Higginsianin B is further methylated by the methyltransferase dpmpI to produce the intermediate named FDDP B. The cytochrome P450 monooxygenase dpmpJ then oxidizes the C-26 methyl to primary alcohol, producing the final diterpenoid pyrone with a C-26 primary alcohol on the gamma-pyrone moiety named FDDP C. The chain is O-methyltransferase dpmpI from Macrophomina phaseolina (strain MS6) (Charcoal rot fungus).